A 91-amino-acid chain; its full sequence is Defensin-like protein 82 (91 aa).

The signal sequence occupies residues 1–27; it reads MAIKKFSSLLLPLLMVLALVVLPIISG. Disulfide bonds link Cys34/Cys72, Cys41/Cys62, Cys47/Cys70, and Cys51/Cys71.

It belongs to the DEFL family.

It is found in the secreted. The chain is Defensin-like protein 82 from Arabidopsis thaliana (Mouse-ear cress).